A 472-amino-acid polypeptide reads, in one-letter code: MRRLNGVDALMLYLDGGSAYNHTLKISVLDPSTDPDGWSWPKARQMFEERAHLLPVFRLRYLPTPLGLHHPIWVEDPEFDLDAHVRRVVCPAPGGMAEFCALVEQIYAHPLDRDRPLWQTWVVEGLDGGRVALVTLLHHAYSDGVGVLDMLAAFYNDTPDEAPVVAPPWEPPPLPSTRQRLGWALRDLPSRLGKIAPTVRAVRDRVRIEREFAKDGDRRVPPTFDRSAPPGPFQRGLSRSRRFSCESFPLAEVREVSKTLGVTINDVFLACVAGAVRRYLERCGSPPTDAMVATMPLAVTPAAERAHPGNYSSVDYVWLRADIADPLERLHATHLAAEATKQHFAQTKDADVGAVVELLPERLISGLARANARTKGRFDTFKNVVVSNVPGPREPRYLGRWRVDQWFSTGQISHGATLNMTVWSYCDQFNLCVMADAVAVRNTWELLGGFRASHEELLAAARAQATPKEMAT.

Residue H139 is the Proton acceptor of the active site. Residues 217–238 are disordered; the sequence is DRRVPPTFDRSAPPGPFQRGLS.

This sequence belongs to the long-chain O-acyltransferase family.

The catalysed reaction is an acyl-CoA + a 1,2-diacyl-sn-glycerol = a triacyl-sn-glycerol + CoA. The protein operates within glycerolipid metabolism; triacylglycerol biosynthesis. This Mycobacterium tuberculosis (strain CDC 1551 / Oshkosh) protein is Putative diacyglycerol O-acyltransferase MT3172.